Here is a 476-residue protein sequence, read N- to C-terminus: NADH-quinone oxidoreductase subunit N (476 aa).

13 helical membrane-spanning segments follow: residues 7–27, 33–53, 59–79, 100–120, 122–142, 156–176, 199–219, 237–257, 265–285, 305–325, 363–383, 399–419, and 437–457; these read LTVEILTAALGLGLLALGLLV, RGIAYVATAGLAGILAAAFGM, VVLGGYVIDPFGTYFKILFLV, GEYYALLVLATLGMMVLASSG, LVSLYLGLELMTITFCILAAF, YVLLGAMSSAIFLYGLSLVYG, LLLGTIFILAGFAFKVTAVPF, FLSVASKAAAFAALVRVFFGA, WVQLFIALAVLTIVLGNLVAI, LLLGIVSFSVLGVGAVMYYAM, VAALMLFSLLSLAGIPPMAGF, IWLAILGILMSMVSVYYYLLV, and VAPGLQVAMVVSLLILFILGI.

This sequence belongs to the complex I subunit 2 family. As to quaternary structure, NDH-1 is composed of 14 different subunits. Subunits NuoA, H, J, K, L, M, N constitute the membrane sector of the complex.

The protein localises to the cell membrane. It carries out the reaction a quinone + NADH + 5 H(+)(in) = a quinol + NAD(+) + 4 H(+)(out). Its function is as follows. NDH-1 shuttles electrons from NADH, via FMN and iron-sulfur (Fe-S) centers, to quinones in the respiratory chain. The immediate electron acceptor for the enzyme in this species is believed to be a menaquinone. Couples the redox reaction to proton translocation (for every two electrons transferred, four hydrogen ions are translocated across the cytoplasmic membrane), and thus conserves the redox energy in a proton gradient. This Moorella thermoacetica (strain ATCC 39073 / JCM 9320) protein is NADH-quinone oxidoreductase subunit N.